A 117-amino-acid chain; its full sequence is Large ribosomal subunit protein uL18 (117 aa).

This sequence belongs to the universal ribosomal protein uL18 family. In terms of assembly, part of the 50S ribosomal subunit; part of the 5S rRNA/L5/L18/L25 subcomplex. Contacts the 5S and 23S rRNAs.

This is one of the proteins that bind and probably mediate the attachment of the 5S RNA into the large ribosomal subunit, where it forms part of the central protuberance. The protein is Large ribosomal subunit protein uL18 of Mannheimia succiniciproducens (strain KCTC 0769BP / MBEL55E).